We begin with the raw amino-acid sequence, 209 residues long: Probable nicotinate-nucleotide adenylyltransferase (209 aa).

It belongs to the NadD family.

It catalyses the reaction nicotinate beta-D-ribonucleotide + ATP + H(+) = deamido-NAD(+) + diphosphate. It participates in cofactor biosynthesis; NAD(+) biosynthesis; deamido-NAD(+) from nicotinate D-ribonucleotide: step 1/1. Functionally, catalyzes the reversible adenylation of nicotinate mononucleotide (NaMN) to nicotinic acid adenine dinucleotide (NaAD). In Shewanella woodyi (strain ATCC 51908 / MS32), this protein is Probable nicotinate-nucleotide adenylyltransferase.